Here is a 361-residue protein sequence, read N- to C-terminus: Beta-hexosaminidase (361 aa).

Residues Asp-69, Arg-77, Arg-144, and 174 to 175 (KH) contribute to the substrate site. His-187 functions as the Proton donor/acceptor in the catalytic mechanism. Catalysis depends on Asp-258, which acts as the Nucleophile.

Belongs to the glycosyl hydrolase 3 family. NagZ subfamily.

It localises to the cytoplasm. It carries out the reaction Hydrolysis of terminal non-reducing N-acetyl-D-hexosamine residues in N-acetyl-beta-D-hexosaminides.. It participates in cell wall biogenesis; peptidoglycan recycling. Functionally, plays a role in peptidoglycan recycling by cleaving the terminal beta-1,4-linked N-acetylglucosamine (GlcNAc) from peptide-linked peptidoglycan fragments, giving rise to free GlcNAc, anhydro-N-acetylmuramic acid and anhydro-N-acetylmuramic acid-linked peptides. The polypeptide is Beta-hexosaminidase (Neisseria gonorrhoeae (strain NCCP11945)).